Here is a 218-residue protein sequence, read N- to C-terminus: Glutathione S-transferase U22 (218 aa).

Ala2 is modified (N-acetylalanine). The 80-residue stretch at 3 to 82 (DEVILLDFWP…YIDEVWSDKN (80 aa)) folds into the GST N-terminal domain. Residues 13–14 (SP), 39–40 (DK), 53–54 (KI), and 66–67 (ES) each bind glutathione. Positions 88–208 (DPYQRAQARF…LHDSEKILAF (121 aa)) constitute a GST C-terminal domain. A Phosphothreonine modification is found at Thr149.

The protein belongs to the GST superfamily. Tau family.

The protein resides in the cytoplasm. Its subcellular location is the cytosol. It catalyses the reaction RX + glutathione = an S-substituted glutathione + a halide anion + H(+). Its function is as follows. May be involved in the conjugation of reduced glutathione to a wide number of exogenous and endogenous hydrophobic electrophiles and have a detoxification role against certain herbicides. In Arabidopsis thaliana (Mouse-ear cress), this protein is Glutathione S-transferase U22 (GSTU22).